A 297-amino-acid chain; its full sequence is Small ribosomal subunit protein uS2 (297 aa).

Low complexity predominate over residues 263-289; sequence AAPTSWEADGGDWAASSAAPAGESWAE. The interval 263–297 is disordered; sequence AAPTSWEADGGDWAASSAAPAGESWAETQPAEAKW.

Belongs to the universal ribosomal protein uS2 family. Component of the small ribosomal subunit. Mature ribosomes consist of a small (40S) and a large (60S) subunit. The 40S subunit contains about 33 different proteins and 1 molecule of RNA (18S). The 60S subunit contains about 49 different proteins and 3 molecules of RNA (25S, 5.8S and 5S). Interacts with rps21.

Its subcellular location is the cytoplasm. Functionally, required for the assembly and/or stability of the 40S ribosomal subunit. Required for the processing of the 20S rRNA-precursor to mature 18S rRNA in a late step of the maturation of 40S ribosomal subunits. The chain is Small ribosomal subunit protein uS2 (rps0) from Neosartorya fischeri (strain ATCC 1020 / DSM 3700 / CBS 544.65 / FGSC A1164 / JCM 1740 / NRRL 181 / WB 181) (Aspergillus fischerianus).